The primary structure comprises 212 residues: Ribonuclease HII (212 aa).

The region spanning 17 to 211 is the RNase H type-2 domain; it reads ANLAGIDEAG…VIEALLSLEQ (195 aa). Residues aspartate 23, glutamate 24, and aspartate 120 each coordinate a divalent metal cation.

Belongs to the RNase HII family. Mn(2+) is required as a cofactor. The cofactor is Mg(2+).

It is found in the cytoplasm. It carries out the reaction Endonucleolytic cleavage to 5'-phosphomonoester.. Its function is as follows. Endonuclease that specifically degrades the RNA of RNA-DNA hybrids. This Chloroflexus aurantiacus (strain ATCC 29364 / DSM 637 / Y-400-fl) protein is Ribonuclease HII.